A 348-amino-acid polypeptide reads, in one-letter code: Protein RecA (348 aa).

Residue 65 to 72 (GPESSGKT) coordinates ATP.

This sequence belongs to the RecA family.

It localises to the cytoplasm. Functionally, can catalyze the hydrolysis of ATP in the presence of single-stranded DNA, the ATP-dependent uptake of single-stranded DNA by duplex DNA, and the ATP-dependent hybridization of homologous single-stranded DNAs. It interacts with LexA causing its activation and leading to its autocatalytic cleavage. The chain is Protein RecA from Vibrio anguillarum (Listonella anguillarum).